Reading from the N-terminus, the 585-residue chain is A-type ATP synthase subunit A (585 aa).

237-244 (GPFGSGKT) contacts ATP.

Belongs to the ATPase alpha/beta chains family. Has multiple subunits with at least A(3), B(3), C, D, E, F, H, I and proteolipid K(x).

It is found in the cell membrane. The enzyme catalyses ATP + H2O + 4 H(+)(in) = ADP + phosphate + 5 H(+)(out). Functionally, component of the A-type ATP synthase that produces ATP from ADP in the presence of a proton gradient across the membrane. The A chain is the catalytic subunit. This is A-type ATP synthase subunit A from Natronomonas pharaonis (strain ATCC 35678 / DSM 2160 / CIP 103997 / JCM 8858 / NBRC 14720 / NCIMB 2260 / Gabara) (Halobacterium pharaonis).